The sequence spans 92 residues: Alpha-defensin 25 (92 aa).

Positions 1-19 are cleaved as a signal peptide; that stretch reads MKTLVLLSALALLAFQVQA. Positions 20 to 57 are excised as a propeptide; sequence DPIQNRDEESKIDEQPGKEDQAVSVSFGDPEGSSLQEE. The segment covering 24 to 40 has biased composition (basic and acidic residues); that stretch reads NRDEESKIDEQPGKEDQ. The disordered stretch occupies residues 24–53; sequence NRDEESKIDEQPGKEDQAVSVSFGDPEGSS. 3 disulfides stabilise this stretch: Cys-63/Cys-92, Cys-65/Cys-80, and Cys-70/Cys-91.

The protein belongs to the alpha-defensin family.

The protein resides in the secreted. Functionally, may have microbicidal activities. The polypeptide is Alpha-defensin 25 (Defa25) (Mus musculus (Mouse)).